The following is a 420-amino-acid chain: Acetyl-CoA acetyltransferase, mitochondrial (420 aa).

Residues 1-26 (MTSRALYSTRSQLCRHLAHKYLSRSY) constitute a mitochondrion transit peptide. The active-site Acyl-thioester intermediate is Cys-119. CoA is bound by residues Tyr-212, 251 to 253 (KVD), and Lys-256. Tyr-212 is a binding site for K(+). Residues Ala-273, Ala-274, and Ala-276 each coordinate K(+). Residue Ser-277 participates in CoA binding. Val-374 contributes to the K(+) binding site. Cys-406 serves as the catalytic Proton donor/acceptor.

The protein belongs to the thiolase-like superfamily. Thiolase family. As to quaternary structure, homotetramer.

Its subcellular location is the mitochondrion. It carries out the reaction 2 acetyl-CoA = acetoacetyl-CoA + CoA. The enzyme catalyses propanoyl-CoA + acetyl-CoA = 2-methyl-3-oxobutanoyl-CoA + CoA. It functions in the pathway lipid metabolism; fatty acid beta-oxidation. Its function is as follows. This is one of the enzymes that catalyzes the last step of the mitochondrial beta-oxidation pathway, an aerobic process breaking down fatty acids into acetyl-CoA. Using free coenzyme A/CoA, catalyzes the thiolytic cleavage of medium- to long-chain 3-oxoacyl-CoAs into acetyl-CoA and a fatty acyl-CoA shortened by two carbon atoms. The activity of the enzyme is reversible and it can also catalyze the condensation of two acetyl-CoA molecules into acetoacetyl-CoA. Thereby, it plays a major role in ketone body metabolism. The chain is Acetyl-CoA acetyltransferase, mitochondrial (acat1) from Danio rerio (Zebrafish).